The sequence spans 108 residues: Synaptobrevin-1 (108 aa).

The disordered stretch occupies residues 1-25 (MDAQGDAGAQGGSQGPRPSNKRLQQ). Residues 1–85 (MDAQGDAGAQ…KRKYWWKNIK (85 aa)) are Cytoplasmic-facing. The region spanning 22–82 (RLQQTQAQVD…ATLKRKYWWK (61 aa)) is the v-SNARE coiled-coil homology domain. Residues 86-106 (MMIIMCAIVVILIIIIVLWAG) traverse the membrane as a helical; Anchor for type IV membrane protein segment. The Extracellular portion of the chain corresponds to 107–108 (GK).

It belongs to the synaptobrevin family. Part of the SNARE core complex containing CBG09569/SNAP25, snb-1/VAMP2 and CBG03570/STX1A. This complex binds to cpx-1/CPLX1.

The protein localises to the cytoplasmic vesicle. Its subcellular location is the secretory vesicle. It localises to the synaptic vesicle membrane. It is found in the cell membrane. The protein resides in the synapse. The protein localises to the synaptosome. Its function is as follows. Involved in the targeting and/or fusion of transport vesicles to their target membrane. Acts in neuronal exocytosis of synaptic transmission. Likely to have a role in cholinergic transmisson. Required for viability, coordinated movement and M3 pharynx motor neuron function. In Caenorhabditis briggsae, this protein is Synaptobrevin-1.